The primary structure comprises 175 residues: Large ribosomal subunit protein uL10 (175 aa).

Belongs to the universal ribosomal protein uL10 family. As to quaternary structure, part of the ribosomal stalk of the 50S ribosomal subunit. The N-terminus interacts with L11 and the large rRNA to form the base of the stalk. The C-terminus forms an elongated spine to which L12 dimers bind in a sequential fashion forming a multimeric L10(L12)X complex.

Functionally, forms part of the ribosomal stalk, playing a central role in the interaction of the ribosome with GTP-bound translation factors. The sequence is that of Large ribosomal subunit protein uL10 from Prochlorococcus marinus (strain MIT 9301).